Reading from the N-terminus, the 115-residue chain is Large ribosomal subunit protein uL22 (115 aa).

It belongs to the universal ribosomal protein uL22 family. Part of the 50S ribosomal subunit.

Functionally, this protein binds specifically to 23S rRNA; its binding is stimulated by other ribosomal proteins, e.g. L4, L17, and L20. It is important during the early stages of 50S assembly. It makes multiple contacts with different domains of the 23S rRNA in the assembled 50S subunit and ribosome. In terms of biological role, the globular domain of the protein is located near the polypeptide exit tunnel on the outside of the subunit, while an extended beta-hairpin is found that lines the wall of the exit tunnel in the center of the 70S ribosome. The protein is Large ribosomal subunit protein uL22 of Limosilactobacillus reuteri subsp. reuteri (strain JCM 1112) (Lactobacillus reuteri).